A 195-amino-acid polypeptide reads, in one-letter code: Thymidylate kinase (195 aa).

7–14 (GIDGVGKS) contacts ATP.

It belongs to the thymidylate kinase family.

The enzyme catalyses dTMP + ATP = dTDP + ADP. Its function is as follows. Phosphorylation of dTMP to form dTDP in both de novo and salvage pathways of dTTP synthesis. The chain is Thymidylate kinase from Campylobacter hominis (strain ATCC BAA-381 / DSM 21671 / CCUG 45161 / LMG 19568 / NCTC 13146 / CH001A).